A 735-amino-acid polypeptide reads, in one-letter code: FHF complex subunit HOOK-interacting protein 2B (735 aa).

The segment at 183–229 (SSSTSDEAAEKDCSGSSSPERASSPSSSSSACSLLSRSGAHPVSSPQ) is disordered. The span at 196–221 (SGSSSPERASSPSSSSSACSLLSRSG) shows a compositional bias: low complexity.

The protein belongs to the FHIP family.

In Danio rerio (Zebrafish), this protein is FHF complex subunit HOOK-interacting protein 2B (fhip2b).